Reading from the N-terminus, the 478-residue chain is MLYEKFEYNINNLIGNFGLSKISIAVSGGSDSVALLYLANIWAEKNNIELFVISVDHNLREQSKQETHYIQNISNSLNRKHYSLSFYHQNNFSNLQERAREGRYDLMTNLCLELDILVLLTAHHEDDYVENFCLRLERNSGIFGLSSSNINWYNNIQIIRPLYNIPKSKLVEYLVRHNIKWFEDESNSSDKYRRNVIRQKLAKGADYIRHFSKPVYREEFKGDTERSTAAYTLVREDASTGTASKLSLEAKCGKMSKAAIISQQLKTNKLIENEFKPELISAIAEAVKIFEYGFAFLDLVKFDKFSNEVKVQIINFLLIIISGQSRVARFYSVEPILKLITQDVNFKNTLHGCIIKRIQNELLIYREFGKKLPESKILLDKSVIWDNRFCITKNQETPNCFVTHLSLKDYKIIKKQLDLEPLKNLSCKNHNAVLLTLPIIKILEKVIAIPHISYYDNDMWNFEVSFSPNFVSRFTHFC.

27–32 (SGGSDS) lines the ATP pocket.

It belongs to the tRNA(Ile)-lysidine synthase family.

The protein localises to the cytoplasm. It carries out the reaction cytidine(34) in tRNA(Ile2) + L-lysine + ATP = lysidine(34) in tRNA(Ile2) + AMP + diphosphate + H(+). Ligates lysine onto the cytidine present at position 34 of the AUA codon-specific tRNA(Ile) that contains the anticodon CAU, in an ATP-dependent manner. Cytidine is converted to lysidine, thus changing the amino acid specificity of the tRNA from methionine to isoleucine. The protein is tRNA(Ile)-lysidine synthase of Rickettsia africae (strain ESF-5).